A 42-amino-acid chain; its full sequence is Photosystem I reaction center subunit IX (42 aa).

Residues 7–27 (FLSSAPVLIMALLTFTAGILI) form a helical membrane-spanning segment.

Belongs to the PsaJ family.

It is found in the cellular thylakoid membrane. Functionally, may help in the organization of the PsaE and PsaF subunits. The polypeptide is Photosystem I reaction center subunit IX (Microcystis aeruginosa (strain NIES-843 / IAM M-2473)).